A 224-amino-acid polypeptide reads, in one-letter code: Phosphoribosylformylglycinamidine synthase subunit PurQ (224 aa).

One can recognise a Glutamine amidotransferase type-1 domain in the interval 2–224; the sequence is KVTILQFPGT…IKMLQGFLRA (223 aa). Residue cysteine 86 is the Nucleophile of the active site. Residues histidine 200 and glutamate 202 contribute to the active site.

Part of the FGAM synthase complex composed of 1 PurL, 1 PurQ and 2 PurS subunits.

The protein localises to the cytoplasm. The enzyme catalyses N(2)-formyl-N(1)-(5-phospho-beta-D-ribosyl)glycinamide + L-glutamine + ATP + H2O = 2-formamido-N(1)-(5-O-phospho-beta-D-ribosyl)acetamidine + L-glutamate + ADP + phosphate + H(+). It catalyses the reaction L-glutamine + H2O = L-glutamate + NH4(+). It functions in the pathway purine metabolism; IMP biosynthesis via de novo pathway; 5-amino-1-(5-phospho-D-ribosyl)imidazole from N(2)-formyl-N(1)-(5-phospho-D-ribosyl)glycinamide: step 1/2. Its function is as follows. Part of the phosphoribosylformylglycinamidine synthase complex involved in the purines biosynthetic pathway. Catalyzes the ATP-dependent conversion of formylglycinamide ribonucleotide (FGAR) and glutamine to yield formylglycinamidine ribonucleotide (FGAM) and glutamate. The FGAM synthase complex is composed of three subunits. PurQ produces an ammonia molecule by converting glutamine to glutamate. PurL transfers the ammonia molecule to FGAR to form FGAM in an ATP-dependent manner. PurS interacts with PurQ and PurL and is thought to assist in the transfer of the ammonia molecule from PurQ to PurL. The chain is Phosphoribosylformylglycinamidine synthase subunit PurQ from Sulfurimonas denitrificans (strain ATCC 33889 / DSM 1251) (Thiomicrospira denitrificans (strain ATCC 33889 / DSM 1251)).